A 1534-amino-acid polypeptide reads, in one-letter code: Activating signal cointegrator 1 complex subunit 3 (1534 aa).

Residues 83-267 form the Helicase ATP-binding 1 domain; that stretch reads ETAYNTNENL…FLHVNPFIGL (185 aa). 96-103 provides a ligand contact to ATP; that stretch reads APTGAGKT. Positions 209–212 match the DEVH box motif; it reads DEVH. In terms of domain architecture, Helicase C-terminal 1 spans 294-500; that stretch reads QLHDMEEVCY…SLADNLNAEI (207 aa). One can recognise an SEC63 1 domain in the interval 576–849; that stretch reads STDLGRTASH…GSEAVCIINF (274 aa). In terms of domain architecture, Helicase ATP-binding 2 spans 898–1073; the sequence is HTLYHTDTNV…WLGIGQVGLF (176 aa). 911 to 918 provides a ligand contact to ATP; the sequence is APTGSGKT. Positions 1015-1018 match the DEIH box motif; sequence DEIH. Residues 1106–1313 form the Helicase C-terminal 2 domain; the sequence is PVFQAIRTHS…GTVTSKQDAM (208 aa). Positions 1374-1481 constitute an SEC63 2 domain; it reads PLTYGRISSY…TLPHIQKQEL (108 aa).

The protein belongs to the helicase family.

It localises to the nucleus. Its subcellular location is the nucleus speckle. The protein resides in the cytoplasm. The protein localises to the cytosol. It carries out the reaction Couples ATP hydrolysis with the unwinding of duplex DNA by translocating in the 3'-5' direction.. The catalysed reaction is ATP + H2O = ADP + phosphate + H(+). In terms of biological role, 3'-5' DNA helicase involved in repair of alkylated DNA. Promotes DNA unwinding to generate single-stranded substrate needed for alkbh3, enabling alkbh3 to process alkylated N3-methylcytosine (3mC) within double-stranded regions. Also involved in activation of the ribosome quality control (RQC) pathway, a pathway that degrades nascent peptide chains during problematic translation. Drives the splitting of stalled ribosomes. The polypeptide is Activating signal cointegrator 1 complex subunit 3 (ascc3) (Danio rerio (Zebrafish)).